We begin with the raw amino-acid sequence, 75 residues long: Tautomerase PptA (75 aa).

Catalysis depends on Pro-2, which acts as the Proton acceptor; via imino nitrogen.

It belongs to the 4-oxalocrotonate tautomerase family. PptA subfamily. In terms of assembly, homodimer.

The protein localises to the cytoplasm. This chain is Tautomerase PptA, found in Shigella sonnei (strain Ss046).